Here is a 334-residue protein sequence, read N- to C-terminus: Ribosomal RNA small subunit methyltransferase H (334 aa).

S-adenosyl-L-methionine is bound by residues 53-55 (GGH), aspartate 72, phenylalanine 99, aspartate 122, and histidine 129.

This sequence belongs to the methyltransferase superfamily. RsmH family.

The protein resides in the cytoplasm. It carries out the reaction cytidine(1402) in 16S rRNA + S-adenosyl-L-methionine = N(4)-methylcytidine(1402) in 16S rRNA + S-adenosyl-L-homocysteine + H(+). Its function is as follows. Specifically methylates the N4 position of cytidine in position 1402 (C1402) of 16S rRNA. This chain is Ribosomal RNA small subunit methyltransferase H, found in Leptospira interrogans serogroup Icterohaemorrhagiae serovar Lai (strain 56601).